The chain runs to 638 residues: Sorting nexin-41 (638 aa).

The segment covering 1–14 (MDSDTSPNPFASSP) has biased composition (low complexity). The segment at 1–69 (MDSDTSPNPF…MGATVPGPKP (69 aa)) is disordered. Over residues 15–30 (PSSPSPRPSLPPPVPR) the composition is skewed to pro residues. The PX domain occupies 84–201 (GEQVHIVDAL…HRFLEEDVSW (118 aa)). 4 residues coordinate a 1,2-diacyl-sn-glycero-3-phospho-(1D-myo-inositol-3-phosphate): arginine 118, serine 120, lysine 144, and arginine 168. 3 disordered regions span residues 215 to 239 (KNPL…SEAP), 408 to 432 (LERG…RERA), and 545 to 638 (PHPN…LGPL). Residues 225-239 (PTFQPTTPTSPSEAP) show a composition bias toward low complexity. A compositionally biased stretch (basic and acidic residues) spans 423 to 432 (EAARDERERA). The span at 552–562 (QTQTQVQSQQS) shows a compositional bias: low complexity. Positions 585 to 601 (MKNEIERVEIEIADKPL) are enriched in basic and acidic residues.

It belongs to the sorting nexin family.

It is found in the endosome membrane. It localises to the endomembrane system. Its function is as follows. May be required for cytoplasm to vacuole transport (Cvt) and pexophagy. The protein is Sorting nexin-41 (SNX41) of Cryptococcus neoformans var. neoformans serotype D (strain B-3501A) (Filobasidiella neoformans).